Reading from the N-terminus, the 51-residue chain is SLVELGKMILQETGKNPVTSYGAYGCNCGVLGHGKPKDATDRCCYVHKCCY.

Cysteines 28 and 44 form a disulfide.

Monomer. Expressed by the venom gland.

The protein localises to the secreted. Its function is as follows. Snake venom phospholipase A2 homolog that lacks enzymatic activity. Shows high myotoxic activity, neutrophile activation (demonstrated by activation induction of IL-1beta production), slight cytotoxicity against Jurkat (leukemia T) and SK-BR-3 (breast adenocarcinoma) tumor cell lines, and slight antiparasitic activity against promastigote forms of Leishmania amazonensis. A model of myotoxic mechanism has been proposed: an apo Lys49-PLA2 is activated by the entrance of a hydrophobic molecule (e.g. fatty acid) at the hydrophobic channel of the protein leading to a reorientation of a monomer. This reorientation causes a transition between 'inactive' to 'active' states, causing alignment of C-terminal and membrane-docking sites (MDoS) side-by-side and putting the membrane-disruption sites (MDiS) in the same plane, exposed to solvent and in a symmetric position for both monomers. The MDoS region stabilizes the toxin on membrane by the interaction of charged residues with phospholipid head groups. Subsequently, the MDiS region destabilizes the membrane with penetration of hydrophobic residues. This insertion causes a disorganization of the membrane, allowing an uncontrolled influx of ions (i.e. calcium and sodium), and eventually triggering irreversible intracellular alterations and cell death. This is Basic phospholipase A2 homolog BmatTX-I from Bothrops mattogrossensis (Pitviper).